The sequence spans 174 residues: Inactive signal peptidase IA (174 aa).

The Cytoplasmic portion of the chain corresponds to 1-7; the sequence is MKKVVKY. Residues 8–28 form a helical membrane-spanning segment; that stretch reads LISLILAIIIVLFVQTFVIVG. Residues 29–174 are Extracellular-facing; it reads HVIPNNDMSP…FSKWTIQFKS (146 aa).

It belongs to the peptidase S26 family.

Its subcellular location is the cell membrane. Catalytically inactive. This is Inactive signal peptidase IA (spsA) from Staphylococcus aureus (strain MRSA252).